The sequence spans 92 residues: Bombyxin A-1 (92 aa).

The first 19 residues, 1–19, serve as a signal peptide directing secretion; sequence MKILLAIALMLSTVMWVST. Residue Q20 is modified to Pyrrolidone carboxylic acid. Cystine bridges form between C29/C79, C41/C92, and C78/C83. The propeptide at 50-70 is c peptide like; the sequence is SGAQFASYGSAWLMPYSEGRG.

This sequence belongs to the insulin family. In terms of assembly, heterodimer of a B chain and an A chain linked by two disulfide bonds.

The protein localises to the secreted. In terms of biological role, brain peptide responsible for activation of prothoracic glands to produce ecdysone in insects. In Bombyx mori (Silk moth), this protein is Bombyxin A-1 (BBXA1).